The following is a 176-amino-acid chain: Neuropeptide-like protein 1 (176 aa).

The signal sequence occupies residues 1-19; the sequence is MKATFVLACLLVIAAVSHA. The segment at 59–79 is disordered; that stretch reads GKRSAEQNEQANKEDKATSDK. Over residues 61 to 79 the composition is skewed to basic and acidic residues; sequence RSAEQNEQANKEDKATSDK.

In terms of biological role, in AWC olfactory sensory neurons, required for the detection of preferred food sources. This Caenorhabditis elegans protein is Neuropeptide-like protein 1 (nlp-1).